A 263-amino-acid polypeptide reads, in one-letter code: 4-hydroxy-tetrahydrodipicolinate reductase (263 aa).

An NAD(+)-binding site is contributed by 10-15 (GASGKM). Arg38 is a binding site for NADP(+). Residues 97 to 99 (GTT) and 123 to 126 (APNF) contribute to the NAD(+) site. Catalysis depends on His153, which acts as the Proton donor/acceptor. A (S)-2,3,4,5-tetrahydrodipicolinate-binding site is contributed by His154. Residue Lys157 is the Proton donor of the active site. 163–164 (GT) provides a ligand contact to (S)-2,3,4,5-tetrahydrodipicolinate.

This sequence belongs to the DapB family.

It is found in the cytoplasm. It catalyses the reaction (S)-2,3,4,5-tetrahydrodipicolinate + NAD(+) + H2O = (2S,4S)-4-hydroxy-2,3,4,5-tetrahydrodipicolinate + NADH + H(+). The enzyme catalyses (S)-2,3,4,5-tetrahydrodipicolinate + NADP(+) + H2O = (2S,4S)-4-hydroxy-2,3,4,5-tetrahydrodipicolinate + NADPH + H(+). It functions in the pathway amino-acid biosynthesis; L-lysine biosynthesis via DAP pathway; (S)-tetrahydrodipicolinate from L-aspartate: step 4/4. In terms of biological role, catalyzes the conversion of 4-hydroxy-tetrahydrodipicolinate (HTPA) to tetrahydrodipicolinate. The polypeptide is 4-hydroxy-tetrahydrodipicolinate reductase (Dehalococcoides mccartyi (strain ATCC BAA-2266 / KCTC 15142 / 195) (Dehalococcoides ethenogenes (strain 195))).